We begin with the raw amino-acid sequence, 233 residues long: Adenosine 5'-phosphosulfate reductase (233 aa).

The [4Fe-4S] cluster site is built by Cys120, Cys121, Cys203, and Cys206. Cys229 functions as the Nucleophile; cysteine thiosulfonate intermediate in the catalytic mechanism.

The protein belongs to the PAPS reductase family. CysH subfamily. Requires [4Fe-4S] cluster as cofactor.

It localises to the cytoplasm. The catalysed reaction is [thioredoxin]-disulfide + sulfite + AMP + 2 H(+) = adenosine 5'-phosphosulfate + [thioredoxin]-dithiol. It functions in the pathway sulfur metabolism; hydrogen sulfide biosynthesis; sulfite from sulfate. Its function is as follows. Catalyzes the formation of sulfite from adenosine 5'-phosphosulfate (APS) using thioredoxin as an electron donor. The protein is Adenosine 5'-phosphosulfate reductase of Lysinibacillus sphaericus (strain C3-41).